An 840-amino-acid chain; its full sequence is OTU domain-containing protein 7B (840 aa).

Positions 49 to 88 (AGNLSPPFSGGSTCPKTPEKGGSDREPTRPSRPILQRQDD) are disordered. Residues 65–77 (TPEKGGSDREPTR) are compositionally biased toward basic and acidic residues. Serine 100 carries the phosphoserine modification. The tract at residues 152–401 (ERDLIEQSML…AVDPGKGWEW (250 aa)) is TRAF-binding. Residues 167–440 (AGRLNWWVSM…VKWIPLSSDS (274 aa)) are catalytic. The OTU domain occupies 183 to 365 (LLPLATTGDG…QAHFSALVSM (183 aa)). Positions 187–193 (ATTGDGN) are regulatory loop. Residue aspartate 191 is part of the active site. Cysteine 194 (nucleophile) is an active-site residue. Catalysis depends on histidine 358, which acts as the Proton acceptor. A compositionally biased stretch (polar residues) spans 440-452 (SQAPLAQPESPTA). Disordered stretches follow at residues 440–592 (SQAP…YSQE) and 653–710 (IMNG…VHCQ). Basic and acidic residues-rich tracts occupy residues 456–471 (DEPR…DKES) and 488–500 (SKRD…KRAD). Serine 464, serine 467, and serine 471 each carry phosphoserine. The Nuclear localization signal motif lies at 483–498 (RRKEKSKRDREKDKKR). Positions 531–541 (KPGGLGSGSGI) are enriched in gly residues. Threonine 730 carries the post-translational modification Phosphothreonine. An A20-type zinc finger spans residues 793–828 (PPTQTKCKQPNCSFYGHPETNNLCSCCYREELRRRE). The Zn(2+) site is built by cysteine 799, cysteine 804, cysteine 816, and cysteine 819.

It belongs to the peptidase C64 family. In terms of assembly, interacts with TRAF6. Interacts with PARK7, leading to inhibit deubiquitinase activity. Interacts with EGFR, ITCH and NEDD4. Interacts with TRAF3. Interacts with ZAP70 in activated T cells, but not in resting T cells. Phosphorylated by EGFR.

Its subcellular location is the cytoplasm. It is found in the nucleus. The catalysed reaction is Thiol-dependent hydrolysis of ester, thioester, amide, peptide and isopeptide bonds formed by the C-terminal Gly of ubiquitin (a 76-residue protein attached to proteins as an intracellular targeting signal).. Its activity is regulated as follows. Deubiquitinase activity is inhibited following interaction with PARK7. Its function is as follows. Negative regulator of the non-canonical NF-kappa-B pathway that acts by mediating deubiquitination of TRAF3, an inhibitor of the NF-kappa-B pathway, thereby acting as a negative regulator of B-cell responses. In response to non-canonical NF-kappa-B stimuli, deubiquitinates 'Lys-48'-linked polyubiquitin chains of TRAF3, preventing TRAF3 proteolysis and over-activation of non-canonical NF-kappa-B. Negatively regulates mucosal immunity against infections. Deubiquitinates ZAP70, and thereby regulates T cell receptor (TCR) signaling that leads to the activation of NF-kappa-B. Plays a role in T cell homeostasis and is required for normal T cell responses, including production of IFNG and IL2. Mediates deubiquitination of EGFR. Has deubiquitinating activity toward 'Lys-11', 'Lys-48' and 'Lys-63'-linked polyubiquitin chains. Has a much higher catalytic rate with 'Lys-11'-linked polyubiquitin chains (in vitro); however the physiological significance of these data are unsure. Hydrolyzes both linear and branched forms of polyubiquitin. Acts as a regulator of mTORC1 and mTORC2 assembly by mediating 'Lys-63'-linked deubiquitination of MLST8, thereby promoting assembly of the mTORC2 complex, while inibiting formation of the mTORC1 complex. This chain is OTU domain-containing protein 7B (Otud7b), found in Mus musculus (Mouse).